The following is a 499-amino-acid chain: MHTHNNFKTPSDEDELDDLDEDMVVGVIAEIEQEVLNESDSDNDEYDLVDMGAPVPENDGDSSYDGNESISSDDSFDPNAADSDSDDSMLDDAGGASAGGATSAKRRKDDDNPSGSNRQSEATFDLDVDDETDETVRAMIAAIKKPRSAPPEIKLEDFITDICFHPDRDIIALATIIGDVHLYEYDNEANKLLRTIEVHSKACRDVEFTEDGRFLLTCSKDKCVMVTDMETEKLKKLYETAHDDAINTLHVLNENLFATGDDAGTVKLWDLRTKNAIFELKELEDQITQLTTNDQNKLLLATSADGYLTTFNIAARKMYVQSEPYEEELSCMGIYRGDSKLVVGTSKGRLYTYNWGQFGYHCDMYPGIKSPISLMIPITDRIACLAGEDGNIRACHIAPYRNLGVVGQHNMPIESLDVNSSGELIASSSHNNDVRFWNVKYFEDFGDIKYNEKHNAYKEQRHNLPSSKCSNASDFFADLTKEDADDDDHDPSAGPSNMA.

Residues M1 to D130 form a disordered region. 2 stretches are compositionally biased toward acidic residues: residues D12 to M23 and I31 to L48. A compositionally biased stretch (low complexity) spans D91–S103. A compositionally biased stretch (polar residues) spans P113–A122. WD repeat units follow at residues K154–L193, V198–L237, A241–E279, E282–Q321, P324–D363, and Q408–D447. A disordered region spans residues T480–A499.

It belongs to the WD repeat WDR55 family.

The protein is WD repeat-containing protein 55 homolog of Drosophila yakuba (Fruit fly).